The primary structure comprises 303 residues: HTH-type transcriptional regulator YjiE (303 aa).

One can recognise an HTH lysR-type domain in the interval 11–68 (IETKWLYDFLTLEKCRNFSQAAVSRNVSQPAFSRRIRALEQAIGVELFNRQVTPLQLS). Residues 28–47 (FSQAAVSRNVSQPAFSRRIR) constitute a DNA-binding region (H-T-H motif).

Belongs to the LysR transcriptional regulatory family. In terms of assembly, forms dimers, tetramers and possibly dodecameric complexes; oligomerization may be governed by cellular concentrations. DNA-binding seems to decrease oligomerization.

Protects cells from HOCl (hypochlorite) stress but not peroxide or diamide stress. Decreases the intracellular load of reactive oxygen species by up-regulating genes involved in methionine and cysteine biosynthesis and down-regulating Fur-regulated genes involved in iron acquisition. Has also been suggested to down-regulate expression of the flagellar regulon, decreasing motility, but this activity was not confirmed in a second study. This is HTH-type transcriptional regulator YjiE (yjiE) from Escherichia coli (strain K12).